The chain runs to 387 residues: 3-ketoacyl-CoA thiolase (387 aa).

The active-site Acyl-thioester intermediate is C91. Catalysis depends on proton acceptor residues H343 and C373.

It belongs to the thiolase-like superfamily. Thiolase family. As to quaternary structure, heterotetramer of two alpha chains (FadB) and two beta chains (FadA).

It localises to the cytoplasm. It carries out the reaction an acyl-CoA + acetyl-CoA = a 3-oxoacyl-CoA + CoA. It participates in lipid metabolism; fatty acid beta-oxidation. Catalyzes the final step of fatty acid oxidation in which acetyl-CoA is released and the CoA ester of a fatty acid two carbons shorter is formed. This Shigella flexneri serotype 5b (strain 8401) protein is 3-ketoacyl-CoA thiolase.